The sequence spans 137 residues: NADH dehydrogenase [ubiquinone] 1 beta subcomplex subunit 7 (137 aa).

A lipid anchor (N-myristoyl glycine) is attached at Gly-2. Residues Arg-56–Arg-98 enclose the CHCH domain. Residues Cys-59 to Cys-69 carry the Cx9C motif 1 motif. Disulfide bonds link Cys-59–Cys-90 and Cys-69–Cys-80. Ser-73 carries the post-translational modification Phosphoserine. A Cx9C motif 2 motif is present at residues Cys-80–Cys-90. Positions Lys-113–Leu-137 are disordered.

The protein belongs to the complex I NDUFB7 subunit family. Complex I is composed of 45 different subunits.

Its subcellular location is the mitochondrion inner membrane. The protein localises to the mitochondrion intermembrane space. Its function is as follows. Accessory subunit of the mitochondrial membrane respiratory chain NADH dehydrogenase (Complex I), that is believed not to be involved in catalysis. Complex I functions in the transfer of electrons from NADH to the respiratory chain. The immediate electron acceptor for the enzyme is believed to be ubiquinone. This chain is NADH dehydrogenase [ubiquinone] 1 beta subcomplex subunit 7 (NDUFB7), found in Pan troglodytes (Chimpanzee).